A 406-amino-acid chain; its full sequence is Formate-dependent phosphoribosylglycinamide formyltransferase (406 aa).

N(1)-(5-phospho-beta-D-ribosyl)glycinamide-binding positions include 28 to 29 and E88; that span reads EL. Residues R121, K162, 167-172, 202-205, and E210 each bind ATP; these read SSGKGQ and EGFI. An ATP-grasp domain is found at 126–320; sequence RLAAEELGCA…EFELHAKAIL (195 aa). Mg(2+)-binding residues include E279 and E291. N(1)-(5-phospho-beta-D-ribosyl)glycinamide-binding positions include D298, K367, and 374-375; that span reads RR.

This sequence belongs to the PurK/PurT family. In terms of assembly, homodimer.

It catalyses the reaction N(1)-(5-phospho-beta-D-ribosyl)glycinamide + formate + ATP = N(2)-formyl-N(1)-(5-phospho-beta-D-ribosyl)glycinamide + ADP + phosphate + H(+). The protein operates within purine metabolism; IMP biosynthesis via de novo pathway; N(2)-formyl-N(1)-(5-phospho-D-ribosyl)glycinamide from N(1)-(5-phospho-D-ribosyl)glycinamide (formate route): step 1/1. In terms of biological role, involved in the de novo purine biosynthesis. Catalyzes the transfer of formate to 5-phospho-ribosyl-glycinamide (GAR), producing 5-phospho-ribosyl-N-formylglycinamide (FGAR). Formate is provided by PurU via hydrolysis of 10-formyl-tetrahydrofolate. The polypeptide is Formate-dependent phosphoribosylglycinamide formyltransferase (Janthinobacterium sp. (strain Marseille) (Minibacterium massiliensis)).